Reading from the N-terminus, the 375-residue chain is D-aspartate oxidase (375 aa).

The N-terminal stretch at 1–17 is a signal peptide; sequence MATVCVVGSGILGLAVA. Residues S9, L12, D34, S51, and G55 each coordinate FAD. An N-linked (GlcNAc...) asparagine glycan is attached at N203. Positions 322, 354, and 355 each coordinate FAD.

The protein belongs to the DAMOX/DASOX family. FAD is required as a cofactor.

The catalysed reaction is D-aspartate + O2 + H2O = oxaloacetate + H2O2 + NH4(+). It carries out the reaction D-glutamate + O2 + H2O = H2O2 + 2-oxoglutarate + NH4(+). Functionally, selectively catalyzes the oxidative deamination of acidic amino acids. Protects the organism from the toxicity of D-amino acids. Enables the organism to utilize D-amino acids as a source of nutrients. Enables the organism to utilize D-aspartate as a nitrogen source. The polypeptide is D-aspartate oxidase (DDO) (Komagataella phaffii (strain GS115 / ATCC 20864) (Yeast)).